A 340-amino-acid polypeptide reads, in one-letter code: Guanine nucleotide-binding protein G(I)/G(S)/G(T) subunit beta-1 (340 aa).

WD repeat units follow at residues 53–83, 95–125, 141–170, 182–212, 224–254, 268–298, and 310–340; these read GHLAKIYAMHWGTDSRLLVSASQDGKLIIWD, LRSSWVMTCAYAPSGNYVACGGLDNICPIYN, GHTGYLSCCRFLDDNQIITSSGDTTCALWD, GHTGDVMSLSLAPDSRCFVSGACDASAKLWD, GHESDINAICFFPNGNAFATGSDDATCRLFD, NIICGITSVAFSKSGRLLLAGYDDFNCNVWD, and GHDNRVSCLGVTDDGMAVATGSWDSFLKIWN.

It belongs to the WD repeat G protein beta family. As to quaternary structure, g proteins are composed of 3 units, alpha, beta and gamma.

Functionally, guanine nucleotide-binding proteins (G proteins) are involved as a modulator or transducer in various transmembrane signaling systems. The beta and gamma chains are required for the GTPase activity, for replacement of GDP by GTP, and for G protein-effector interaction. The protein is Guanine nucleotide-binding protein G(I)/G(S)/G(T) subunit beta-1 (gnb1) of Xenopus laevis (African clawed frog).